We begin with the raw amino-acid sequence, 258 residues long: MLSRRIIPCLDVRNGRVVKGVKFHDHIDMGDIVELALRYRAQGADELVFYDIGASPEGRSVDYTWVERVARLIDIPFCVAGGIGDVETARAVLHAGADKISINSPALGRPQLISELADAFGVQCVVVGIDSIREDDGQWRVRRYTGDPSKTQALPMRTLDWVAEAQRLGAGEIVLNCMDNDGVRRGYDIAQLRQVRALCHVPLIASGGAGEMQHFADVFDQADVDGALAASVFHSGAIPIPELKQFLRAQQIEVRDGQ.

Active-site residues include D11 and D130.

It belongs to the HisA/HisF family. Heterodimer of HisH and HisF.

It is found in the cytoplasm. It carries out the reaction 5-[(5-phospho-1-deoxy-D-ribulos-1-ylimino)methylamino]-1-(5-phospho-beta-D-ribosyl)imidazole-4-carboxamide + L-glutamine = D-erythro-1-(imidazol-4-yl)glycerol 3-phosphate + 5-amino-1-(5-phospho-beta-D-ribosyl)imidazole-4-carboxamide + L-glutamate + H(+). The protein operates within amino-acid biosynthesis; L-histidine biosynthesis; L-histidine from 5-phospho-alpha-D-ribose 1-diphosphate: step 5/9. IGPS catalyzes the conversion of PRFAR and glutamine to IGP, AICAR and glutamate. The HisF subunit catalyzes the cyclization activity that produces IGP and AICAR from PRFAR using the ammonia provided by the HisH subunit. This Xanthomonas oryzae pv. oryzae (strain MAFF 311018) protein is Imidazole glycerol phosphate synthase subunit HisF.